Here is a 317-residue protein sequence, read N- to C-terminus: DNA-directed RNA polymerase subunit alpha (317 aa).

The interval 1-230 (MIEIEMEKPK…EHLNLFITLT (230 aa)) is alpha N-terminal domain (alpha-NTD). Residues 247–317 (KEKVLEMTIE…LGLGLRPSDE (71 aa)) are alpha C-terminal domain (alpha-CTD).

This sequence belongs to the RNA polymerase alpha chain family. Homodimer. The RNAP catalytic core consists of 2 alpha, 1 beta, 1 beta' and 1 omega subunit. When a sigma factor is associated with the core the holoenzyme is formed, which can initiate transcription.

It catalyses the reaction RNA(n) + a ribonucleoside 5'-triphosphate = RNA(n+1) + diphosphate. In terms of biological role, DNA-dependent RNA polymerase catalyzes the transcription of DNA into RNA using the four ribonucleoside triphosphates as substrates. The protein is DNA-directed RNA polymerase subunit alpha of Alkaliphilus oremlandii (strain OhILAs) (Clostridium oremlandii (strain OhILAs)).